Here is a 335-residue protein sequence, read N- to C-terminus: Glyceraldehyde-3-phosphate dehydrogenase (335 aa).

NAD(+) contacts are provided by residues 11 to 12, Asp-33, and Lys-78; that span reads RI. D-glyceraldehyde 3-phosphate-binding positions include 148–150, Thr-179, 208–209, and Arg-231; these read SST and TG. Asn-313 contacts NAD(+).

Belongs to the glyceraldehyde-3-phosphate dehydrogenase family. As to quaternary structure, homotetramer.

It localises to the cytoplasm. The enzyme catalyses D-glyceraldehyde 3-phosphate + phosphate + NAD(+) = (2R)-3-phospho-glyceroyl phosphate + NADH + H(+). It functions in the pathway carbohydrate degradation; glycolysis; pyruvate from D-glyceraldehyde 3-phosphate: step 1/5. The chain is Glyceraldehyde-3-phosphate dehydrogenase (GPD) from Pleurotus sajor-caju (Oyster mushroom).